The sequence spans 131 residues: Maturin (131 aa).

The segment covering F107–E120 has biased composition (acidic residues). Positions F107–Q131 are disordered.

The protein belongs to the MTURN family.

Its subcellular location is the cytoplasm. Involved in early neuronal development; required for cell cycle exit and differentiation of primary neurons. Cooperates synergistically with pak3 to promote primary neural differentiation within the neural plate. May play a role in promoting megakaryocyte differentiation. This is Maturin (mturn) from Xenopus laevis (African clawed frog).